The sequence spans 399 residues: Acetate kinase (399 aa).

Residue Asn9 participates in Mg(2+) binding. Residue Lys16 coordinates ATP. Arg90 provides a ligand contact to substrate. Catalysis depends on Asp147, which acts as the Proton donor/acceptor. ATP contacts are provided by residues 207–211 (HLGNG), 281–283 (DFR), and 333–337 (GVGEN). Mg(2+) is bound at residue Glu387.

Belongs to the acetokinase family. Homodimer. Mg(2+) serves as cofactor. It depends on Mn(2+) as a cofactor.

It localises to the cytoplasm. The catalysed reaction is acetate + ATP = acetyl phosphate + ADP. It functions in the pathway metabolic intermediate biosynthesis; acetyl-CoA biosynthesis; acetyl-CoA from acetate: step 1/2. Its function is as follows. Catalyzes the formation of acetyl phosphate from acetate and ATP. Can also catalyze the reverse reaction. The chain is Acetate kinase from Mycobacterium sp. (strain KMS).